Reading from the N-terminus, the 716-residue chain is FLYWCH-type zinc finger-containing protein 1 (716 aa).

Residues 1 to 35 (MPLPEPSEQEGESVKAGQEPSPKPGTDVIPAAPRK) are disordered. Ser21 is subject to Phosphoserine. An FLYWCH-type 1 zinc finger spans residues 116–174 (FLRTPFGGRLLVLESFLYKQEKAVGDKVYWKCRQHAELGCRGRAITRGLRATVMRGHCH). Lys134 is covalently cross-linked (Glycyl lysine isopeptide (Lys-Gly) (interchain with G-Cter in SUMO2)). The disordered stretch occupies residues 191–231 (PSLALPEGLGEPQGPEGPGGRVEEPLEGVGPWQCPEEPEPT). A compositionally biased stretch (low complexity) spans 195-204 (LPEGLGEPQG). Phosphoserine is present on Ser261. Residues 273 to 331 (FLRTCYGGSFLVHESFLYKREKAVGDKVYWTCRDHALHGCRSRAITQGQRVTVMRGHCH) form an FLYWCH-type 2 zinc finger. Residue Ser371 is modified to Phosphoserine. Residues 377–421 (GPGPLTLTRPRPRKRAKVEDQELPTQPEAPDEHQDMDADPGGPEF) are disordered. A Glycyl lysine isopeptide (Lys-Gly) (interchain with G-Cter in SUMO2) cross-link involves residue Lys393. The FLYWCH-type 3 zinc finger occupies 421–479 (FLKTPLGGSFLVYESFLYRREKAAGEKVYWTCRDQARMGCRSRAITQGRRVTVMRGHCH). Residue Ser503 is modified to Phosphoserine. The segment at 509–567 (FLKTPLGGSFLVYESFLYRREKAAGEKVYWTCRDQARMGCRSRAITQGRRVMVMRRHCH) adopts an FLYWCH-type 4 zinc-finger fold. Ser591 is subject to Phosphoserine. The FLYWCH-type 5 zinc-finger motif lies at 600 to 658 (FLRTSLGGRFLVHESFLYRKEKAAGEKVYWMCRDQARLGCRSRAITQGHRIMVMRSHCH). Residue Lys685 forms a Glycyl lysine isopeptide (Lys-Gly) (interchain with G-Cter in SUMO2) linkage. Phosphoserine is present on Ser696.

In terms of assembly, interacts with CTNNB1 (when unphosphorylated), perhaps preventing interaction of CTNNB1 with TCF4, and thereby regulating transcription activation; phosphorylation of CTNNB1 may inhibit the interaction.

It is found in the nucleus. It localises to the chromosome. Its subcellular location is the centromere. Functionally, transcription cofactor. Negatively regulates transcription activation by catenin beta-1 CTNNB1, perhaps acting by competing with TCF4 for CTNNB1 binding. May play a role in DNA-damage response signaling. Binds specifically to DNA sequences at peri-centromeric chromatin loci. This Homo sapiens (Human) protein is FLYWCH-type zinc finger-containing protein 1 (FLYWCH1).